Reading from the N-terminus, the 634-residue chain is ATP-dependent clpX-like chaperone, mitochondrial (634 aa).

The transit peptide at 1–56 directs the protein to the mitochondrion; sequence MSSCGACTCGAAAARLLTTSLTSAQRGISCGRIHVPVLGRLGTTLDAQALRRAPLR. The interval 69-102 is disordered; sequence DGANKDGSGDGNKKSVTEGSSKKSGSGNSGKGGN. Residues 70–84 show a composition bias toward basic and acidic residues; the sequence is GANKDGSGDGNKKSV. The span at 85–94 shows a compositional bias: low complexity; sequence TEGSSKKSGS. The 54-residue stretch at 94-147 folds into the ClpX-type ZB domain; sequence SGNSGKGGNQLRCPKCGDLCTHVETFVSSTRFVKCEKCHHFFVVLSEADSKKSI. Zn(2+)-binding residues include Cys106, Cys109, Cys128, and Cys131. 295 to 302 provides a ligand contact to ATP; sequence PTGSGKTL. Lys438 is subject to N6-acetyllysine. Residues 599–611 are compositionally biased toward basic and acidic residues; sequence KEPGYIRAPSKES. Residues 599 to 634 form a disordered region; sequence KEPGYIRAPSKESSEEEYDSGVEEDGWPRQADAANS. Residues 612-623 show a composition bias toward acidic residues; sequence SEEEYDSGVEED. The residue at position 618 (Ser618) is a Phosphoserine.

The protein belongs to the ClpX chaperone family. In terms of assembly, homohexamer that forms a ring structure; this hexamerization requires ATP binding. Component of the ClpXP complex formed by the assembly of two CLPP heptameric rings with two CLPX hexameric rings, giving rise to a symmetrical structure with two central CLPP rings flanked by a CLPX ring at either end of the complex. Interacts with TFAM. Detected in liver (at protein level).

The protein localises to the mitochondrion. It is found in the mitochondrion matrix. It localises to the mitochondrion nucleoid. It carries out the reaction ATP + H2O = ADP + phosphate + H(+). Its function is as follows. ATP-dependent chaperone that functions as an unfoldase. As part of the ClpXP protease complex, it recognizes specific protein substrates, unfolds them using energy derived from ATP hydrolysis, and then translocates them to the proteolytic subunit (CLPP) of the ClpXP complex for degradation. Thanks to its chaperone activity, it also functions in the incorporation of the pyridoxal phosphate cofactor into 5-aminolevulinate synthase, thereby activating 5-aminolevulinate (ALA) synthesis, the first step in heme biosynthesis. This chaperone is also involved in the control of mtDNA nucleoid distribution, by regulating mitochondrial transcription factor A (TFAM) activity. The protein is ATP-dependent clpX-like chaperone, mitochondrial of Mus musculus (Mouse).